A 619-amino-acid polypeptide reads, in one-letter code: Very-long-chain aldehyde decarbonylase GL1-4 (619 aa).

The next 5 membrane-spanning stretches (helical) occupy residues 45 to 65 (IAFS…QIWI), 94 to 114 (GWDD…LAMP), 126 to 146 (GAVV…YWFH), 178 to 198 (FAEH…TIYL), and 325 to 345 (AWYM…AWIY). The region spanning 138–272 (VEFLYYWFHR…MPFYDYIYNT (135 aa)) is the Fatty acid hydroxylase domain.

This sequence belongs to the sterol desaturase family. Homodimer. Expressed ubiquitously at low levels, with higher accumulation in developing panicles, shoots and flag leaves.

Its subcellular location is the endoplasmic reticulum membrane. It catalyses the reaction a long-chain fatty aldehyde + 2 NADPH + O2 + H(+) = a long-chain alkane + formate + 2 NADP(+) + H2O. Aldehyde decarbonylase involved in the conversion of aldehydes to alkanes. Core component of a very-long-chain alkane synthesis complex. The sequence is that of Very-long-chain aldehyde decarbonylase GL1-4 from Oryza sativa subsp. japonica (Rice).